The following is a 380-amino-acid chain: Putative glutamate--cysteine ligase 2 (380 aa).

Belongs to the glutamate--cysteine ligase type 2 family. YbdK subfamily.

The enzyme catalyses L-cysteine + L-glutamate + ATP = gamma-L-glutamyl-L-cysteine + ADP + phosphate + H(+). ATP-dependent carboxylate-amine ligase which exhibits weak glutamate--cysteine ligase activity. This chain is Putative glutamate--cysteine ligase 2, found in Pseudomonas entomophila (strain L48).